Reading from the N-terminus, the 141-residue chain is Large ribosomal subunit protein uL11 (141 aa).

The protein belongs to the universal ribosomal protein uL11 family. Part of the ribosomal stalk of the 50S ribosomal subunit. Interacts with L10 and the large rRNA to form the base of the stalk. L10 forms an elongated spine to which L12 dimers bind in a sequential fashion forming a multimeric L10(L12)X complex. One or more lysine residues are methylated.

Its function is as follows. Forms part of the ribosomal stalk which helps the ribosome interact with GTP-bound translation factors. The chain is Large ribosomal subunit protein uL11 from Ruminiclostridium cellulolyticum (strain ATCC 35319 / DSM 5812 / JCM 6584 / H10) (Clostridium cellulolyticum).